The chain runs to 466 residues: F-box only protein 15 (466 aa).

The region spanning 27 to 73 (SASLDSLPSEVLLKILSYLDAAALLCAGCVNRRFYHLANDNFIWIRI) is the F-box domain.

As to quaternary structure, directly interacts with SKP1 and CUL1.

Functionally, substrate-recognition component of the SCF (SKP1-CUL1-F-box protein)-type E3 ubiquitin ligase complex. The protein is F-box only protein 15 (FBXO15) of Bos taurus (Bovine).